The sequence spans 582 residues: Protein alan shepard (582 aa).

Positions 1 to 12 (MHPRYSPAPPPQ) are enriched in pro residues. The interval 1–73 (MHPRYSPAPP…AAPPTSRSAF (73 aa)) is disordered. Tyr5 is modified (phosphotyrosine). Residues 13–24 (QQQQMGGPLHQQ) are compositionally biased toward low complexity. The segment covering 25 to 36 (QGGGGGGGGGIR) has biased composition (gly residues). Over residues 39–57 (SNAQQLPPQIPRSQNYSNG) the composition is skewed to polar residues. A compositionally biased stretch (low complexity) spans 58-72 (SSSSAAAAPPTSRSA). Phosphotyrosine is present on residues Tyr125 and Tyr142. A disordered region spans residues 164–225 (PATTTYGQRV…TVQNQNQQGG (62 aa)). Over residues 178–225 (SPSNTNSSSSSNTGSQSGTLSTSLSNTTNTNTNMGPNGTVQNQNQQGG) the composition is skewed to low complexity. 2 RRM domains span residues 231-304 (TNLY…MAKQ) and 310-389 (TNLY…FADG). The interval 555 to 582 (PMTDSEQASTAASPDEAYTQYPHQAAPK) is disordered.

Functionally, has a role in the perception of gravity. The protein is Protein alan shepard of Drosophila yakuba (Fruit fly).